The following is a 185-amino-acid chain: Photosystem I assembly protein Ycf4 (185 aa).

A run of 2 helical transmembrane segments spans residues 24-44 (YIIG…SISS) and 58-78 (ALLF…ANLL).

Belongs to the Ycf4 family.

The protein resides in the cellular thylakoid membrane. In terms of biological role, seems to be required for the assembly of the photosystem I complex. This chain is Photosystem I assembly protein Ycf4, found in Prochlorococcus marinus (strain MIT 9215).